A 518-amino-acid chain; its full sequence is 3-octaprenyl-4-hydroxybenzoate carboxy-lyase (518 aa).

N177 contacts Mn(2+). Residues 180–182 (IYR), 194–196 (RWL), and 199–200 (RG) each bind prenylated FMN. E243 provides a ligand contact to Mn(2+). D318 functions as the Proton donor in the catalytic mechanism.

This sequence belongs to the UbiD family. Homohexamer. Prenylated FMN serves as cofactor. The cofactor is Mn(2+).

It localises to the cell membrane. The enzyme catalyses a 4-hydroxy-3-(all-trans-polyprenyl)benzoate + H(+) = a 2-(all-trans-polyprenyl)phenol + CO2. It functions in the pathway cofactor biosynthesis; ubiquinone biosynthesis. Functionally, catalyzes the decarboxylation of 3-octaprenyl-4-hydroxy benzoate to 2-octaprenylphenol, an intermediate step in ubiquinone biosynthesis. The protein is 3-octaprenyl-4-hydroxybenzoate carboxy-lyase of Burkholderia lata (strain ATCC 17760 / DSM 23089 / LMG 22485 / NCIMB 9086 / R18194 / 383).